We begin with the raw amino-acid sequence, 363 residues long: Fructose-1,6-bisphosphate aldolase/phosphatase (363 aa).

Catalysis depends on Asp-11, which acts as the Proton acceptor; for FBP phosphatase activity. The Mg(2+) site is built by Asp-11, His-18, Asp-51, and Asp-52. His-18 is a beta-D-fructose 1,6-bisphosphate binding site. His-18 contacts dihydroxyacetone phosphate. Residue Tyr-89 participates in beta-D-fructose 1,6-bisphosphate binding. Gln-93 serves as a coordination point for Mg(2+). 102–103 provides a ligand contact to beta-D-fructose 1,6-bisphosphate; it reads GN. A Mg(2+)-binding site is contributed by Asp-130. Position 131 (Lys-131) interacts with beta-D-fructose 1,6-bisphosphate. Lys-131 contacts dihydroxyacetone phosphate. Tyr-230 (proton donor/acceptor; for FBP aldolase activity) is an active-site residue. Positions 233, 234, and 235 each coordinate Mg(2+). Lys-233 serves as the catalytic Schiff-base intermediate with DHAP; for FBP aldolase activity. Residues 243 to 244, Arg-267, and Tyr-348 contribute to the beta-D-fructose 1,6-bisphosphate site; that span reads QK. Arg-267 is a binding site for dihydroxyacetone phosphate.

Belongs to the FBP aldolase/phosphatase family. Homooctamer; dimer of tetramers. Requires Mg(2+) as cofactor.

The catalysed reaction is beta-D-fructose 1,6-bisphosphate + H2O = beta-D-fructose 6-phosphate + phosphate. It catalyses the reaction beta-D-fructose 1,6-bisphosphate = D-glyceraldehyde 3-phosphate + dihydroxyacetone phosphate. It participates in carbohydrate biosynthesis; gluconeogenesis. Functionally, catalyzes two subsequent steps in gluconeogenesis: the aldol condensation of dihydroxyacetone phosphate (DHAP) and glyceraldehyde-3-phosphate (GA3P) to fructose-1,6-bisphosphate (FBP), and the dephosphorylation of FBP to fructose-6-phosphate (F6P). This chain is Fructose-1,6-bisphosphate aldolase/phosphatase, found in Thermus thermophilus (strain ATCC BAA-163 / DSM 7039 / HB27).